The chain runs to 287 residues: Pyridoxal kinase PdxY (287 aa).

Substrate is bound by residues Ser-9 and 44 to 45 (TQ). Residues Asp-111, Glu-147, and Lys-180 each contribute to the ATP site. Position 221 (Asp-221) interacts with substrate.

Belongs to the pyridoxine kinase family. PdxY subfamily. As to quaternary structure, homodimer. It depends on Mg(2+) as a cofactor.

It carries out the reaction pyridoxal + ATP = pyridoxal 5'-phosphate + ADP + H(+). It participates in cofactor metabolism; pyridoxal 5'-phosphate salvage; pyridoxal 5'-phosphate from pyridoxal: step 1/1. Pyridoxal kinase involved in the salvage pathway of pyridoxal 5'-phosphate (PLP). Catalyzes the phosphorylation of pyridoxal to PLP. This Paraburkholderia phymatum (strain DSM 17167 / CIP 108236 / LMG 21445 / STM815) (Burkholderia phymatum) protein is Pyridoxal kinase PdxY.